Reading from the N-terminus, the 189-residue chain is Inner membrane-spanning protein YciB (189 aa).

5 helical membrane passes run Ile-23–Trp-43, Ile-54–Phe-74, Val-82–Ile-102, Leu-120–Lys-140, and Phe-150–Leu-170.

Belongs to the YciB family.

The protein resides in the cell inner membrane. Functionally, plays a role in cell envelope biogenesis, maintenance of cell envelope integrity and membrane homeostasis. This chain is Inner membrane-spanning protein YciB, found in Chromohalobacter salexigens (strain ATCC BAA-138 / DSM 3043 / CIP 106854 / NCIMB 13768 / 1H11).